The sequence spans 493 residues: ATP synthase subunit beta (493 aa).

Gly169–Thr176 is a binding site for ATP.

Belongs to the ATPase alpha/beta chains family. In terms of assembly, F-type ATPases have 2 components, CF(1) - the catalytic core - and CF(0) - the membrane proton channel. CF(1) has five subunits: alpha(3), beta(3), gamma(1), delta(1), epsilon(1). CF(0) has three main subunits: a(1), b(2) and c(9-12). The alpha and beta chains form an alternating ring which encloses part of the gamma chain. CF(1) is attached to CF(0) by a central stalk formed by the gamma and epsilon chains, while a peripheral stalk is formed by the delta and b chains.

The protein resides in the cell inner membrane. The catalysed reaction is ATP + H2O + 4 H(+)(in) = ADP + phosphate + 5 H(+)(out). Its function is as follows. Produces ATP from ADP in the presence of a proton gradient across the membrane. The catalytic sites are hosted primarily by the beta subunits. The chain is ATP synthase subunit beta from Gluconacetobacter diazotrophicus (strain ATCC 49037 / DSM 5601 / CCUG 37298 / CIP 103539 / LMG 7603 / PAl5).